The primary structure comprises 299 residues: Taste receptor type 2 member 50 (299 aa).

Residue M1 is a topological domain, extracellular. A helical transmembrane segment spans residues 2–22; sequence ITFLYIFFSILILVLFVLGNF. Topologically, residues 23 to 55 are cytoplasmic; it reads ANGFIALVNFIDWVKRKKISSADQILTALAVSR. The helical transmembrane segment at 56–76 threads the bilayer; the sequence is IGLLWALLLNWYLTVLNPAFY. The Extracellular portion of the chain corresponds to 77 to 87; it reads SVELRITSYNA. Residues 88 to 108 traverse the membrane as a helical segment; the sequence is WVVTNHFSMWLAASLSIFYLL. Topologically, residues 109-126 are cytoplasmic; that stretch reads KIANFSNLIFLHLKRRVR. A helical transmembrane segment spans residues 127 to 147; sequence SVILVILLGTLIFLVCHLLVA. Over 148 to 181 the chain is Extracellular; it reads NMDESMWAEEYEGNMTGKMKLRNTVHLSYLTVTT. A glycan (N-linked (GlcNAc...) asparagine) is linked at N161. A helical membrane pass occupies residues 182–202; it reads LWSFIPFTLSLISFLMLICSL. The Cytoplasmic segment spans residues 203–229; it reads CKHLKKMQLHGEGSQDLSTKVHIKALQ. Residues 230-250 traverse the membrane as a helical segment; the sequence is TLISFLLLCAIFFLFLIISVW. Topologically, residues 251–259 are extracellular; that stretch reads SPRRLQNDP. Residues 260 to 280 traverse the membrane as a helical segment; it reads VVMVSKAVGNIYLAFDSFILI. At 281 to 299 the chain is on the cytoplasmic side; it reads WRTKKLKHTFLLILCQIRC.

This sequence belongs to the G-protein coupled receptor T2R family.

The protein localises to the membrane. Receptor that may play a role in the perception of bitterness and is gustducin-linked. May play a role in sensing the chemical composition of the gastrointestinal content. The activity of this receptor may stimulate alpha gustducin, mediate PLC-beta-2 activation and lead to the gating of TRPM5. This chain is Taste receptor type 2 member 50 (TAS2R50), found in Gorilla gorilla gorilla (Western lowland gorilla).